The sequence spans 170 residues: Photosystem II extrinsic protein V (170 aa).

The signal sequence occupies residues 1–33 (MASFFSTLRRSLNRLLIALPVLLGLMISTPAQA). Heme c-binding residues include cysteine 70, cysteine 73, histidine 74, and histidine 125.

Belongs to the cytochrome c family. PsbV subfamily. As to quaternary structure, PSII is composed of 1 copy each of membrane proteins PsbA, PsbB, PsbC, PsbD, PsbE, PsbF, PsbH, PsbI, PsbJ, PsbK, PsbL, PsbM, PsbT, PsbX, PsbY, PsbZ, Psb30/Ycf12, peripheral proteins PsbO, CyanoQ (PsbQ), PsbU, PsbV and a large number of cofactors. It forms dimeric complexes. Heme c is required as a cofactor.

It is found in the cellular thylakoid membrane. One of the extrinsic, lumenal subunits of photosystem II (PSII). PSII is a light-driven water plastoquinone oxidoreductase, using light energy to abstract electrons from H(2)O, generating a proton gradient subsequently used for ATP formation. The extrinsic proteins stabilize the structure of photosystem II oxygen-evolving complex (OEC), the ion environment of oxygen evolution and protect the OEC against heat-induced inactivation. Low-potential cytochrome c that plays a role in the OEC of PSII. The polypeptide is Photosystem II extrinsic protein V (Synechococcus sp. (strain CC9311)).